We begin with the raw amino-acid sequence, 1446 residues long: E3 ubiquitin-protein ligase listerin (1446 aa).

HEAT repeat units follow at residues 71–108 (QTREKGLKELMELINTENSSIESSYEHFCGLVAQLTTD), 115–153 (MLTMKVISQFLTKLKKSASKGLKKIIPFVLFAKSDVTNG), 324–361 (SLQKGIYPRLLNLIRKKGNHWRVLKHYLLPAVSVLLQK), 363–399 (ENPALITSIITSFTDNLPWQAEASMNAIHCWFCTFSD), 413–450 (EILKDLSPLIVEMSNQSMHFNTAEATECISGLIHWIIE), 630–669 (AENVDFLISLLQSLDSKEDPEERKNLVLKLLSALFDAEDE), 684–721 (GDFEQFFEKLFANMEEEDAERVLEIAARFDKLVGFCDA), 1046–1083 (LRALFVISEFPTSFSNDDDVANQEFIPELSVFKYPAFQ), 1107–1144 (SVARLLMPIMFKLENAAALKSNEDSELPVSTNRRKLSL), 1165–1202 (LLDLTLLPLENTKDSGFSQEHRVAYCDVIDPFFKNALN), and 1251–1289 (FKSMTLLPAAIRLFYKGMPNCFMPMFQETVTKYASRLLI). Residues 1395-1442 (CTICMMTVHQQTHQLPKIKCKQCKNKFHSNCLYKWFESSNQSTCPLCR) form an RING-type zinc finger.

It belongs to the LTN1 family. As to quaternary structure, component of the ribosome quality control complex (RQC), composed of at least the E3 ubiquitin ligase ltn1 and nemf. The complex probably also contains tcf25 as well as vcp/p97 and its ubiquitin-binding cofactors. RQC forms a stable complex with 60S ribosomal subunits.

The protein resides in the cytoplasm. The protein localises to the cytosol. It catalyses the reaction S-ubiquitinyl-[E2 ubiquitin-conjugating enzyme]-L-cysteine + [acceptor protein]-L-lysine = [E2 ubiquitin-conjugating enzyme]-L-cysteine + N(6)-ubiquitinyl-[acceptor protein]-L-lysine.. It functions in the pathway protein modification; protein ubiquitination. Its function is as follows. E3 ubiquitin-protein ligase. Component of the ribosome quality control complex (RQC), a ribosome-associated complex that mediates ubiquitination and extraction of incompletely synthesized nascent chains for proteasomal degradation. Ubiquitination leads to vcp/p97 recruitment for extraction and degradation of the incomplete translation product. The protein is E3 ubiquitin-protein ligase listerin of Caenorhabditis elegans.